The chain runs to 318 residues: Isoflavone reductase (318 aa).

NADP(+)-binding positions include 11–17, Arg-36, and Lys-44; that span reads GPTGAIG. The Proton acceptor role is filled by Lys-144. Arg-148 is an NADP(+) binding site.

The protein belongs to the NmrA-type oxidoreductase family. Isoflavone reductase subfamily.

The catalysed reaction is (3R)-vestitone + NADP(+) = 2'-hydroxyformononetin + NADPH + 2 H(+). The protein operates within phytoalexin biosynthesis; pterocarpan phytoalexin biosynthesis. Its function is as follows. Reduces achiral isoflavones to chiral isoflavanones during the biosynthesis of chiral pterocarpan phytoalexins. The reduction product is a third isomer, which represents the penultimate intermediate in the synthesis of the phytoalexin (-)-medicarpin, the major phytoalexin in Alfalfa. In Medicago sativa (Alfalfa), this protein is Isoflavone reductase.